Here is a 762-residue protein sequence, read N- to C-terminus: uncharacterized protein (762 aa).

Residues methionine 1–isoleucine 26 form a disordered region. Over residues aspartate 12–glycine 21 the composition is skewed to basic and acidic residues. The segment at residues cysteine 30–cysteine 57 is a DNA-binding region (zn(2)-C6 fungal-type). The segment at glutamine 647–proline 668 is disordered.

The protein localises to the nucleus. This is an uncharacterized protein from Schizosaccharomyces pombe (strain 972 / ATCC 24843) (Fission yeast).